Consider the following 440-residue polypeptide: Armadillo-like helical domain containing protein 1 (440 aa).

The protein is Armadillo-like helical domain containing protein 1 of Homo sapiens (Human).